A 1148-amino-acid chain; its full sequence is Signal transducer and activator of transcription B (1148 aa).

Residues 1–36 (MEVTNNGSNNSSTIASTNPPTSPSTTSTSKSLPPLS) show a composition bias toward low complexity. Disordered regions lie at residues 1–81 (MEVT…NNNN), 93–178 (SSSN…LSSS), 268–312 (NTNN…PSNG), 403–425 (KNNI…NSLL), and 453–645 (YDYN…KTVT). Over residues 37 to 47 (FLNSQWENKQS) the composition is skewed to polar residues. Composition is skewed to low complexity over residues 48 to 81 (NNNN…NNNN), 106 to 178 (NNNN…LSSS), and 268 to 298 (NTNN…NNNN). Residues 466 to 517 (SNSSNNNSSNNNSNNNNNNNSNNNNNIIGSISPPHSSQLQQVSSPQQQQQQQ) show a composition bias toward low complexity. The segment covering 525 to 541 (SISSGSIKDLINSPNKE) has biased composition (polar residues). Residues 544–557 (SKSQYPSSLSQSSS) show a composition bias toward low complexity. Over residues 561–572 (MDTDVDSTDEFD) the composition is skewed to acidic residues. A compositionally biased stretch (low complexity) spans 574-610 (GSNSNNNNNNNNNNNNNNNSNNSNNKKRNNSNNNNLG). Residues 997–1122 (WQNGFIFMFL…TIPVFKREPK (126 aa)) enclose the SH2 domain.

It belongs to the transcription factor STAT family. As to quaternary structure, homodimer. Does not form heterodimers with other family members.

Its subcellular location is the nucleus. Transcription factor that regulates gene expression during development. Required for optimal cell growth. The polypeptide is Signal transducer and activator of transcription B (dstB) (Dictyostelium discoideum (Social amoeba)).